The primary structure comprises 299 residues: Leucine zipper transcription factor-like protein 1 (299 aa).

A coiled-coil region spans residues 96-296 (LKLQTDISEL…DLRKRLAQYE (201 aa)). Residues 145–299 (GTAELLNKEI…KRLAQYEPED (155 aa)) are interaction with BSS9.

It belongs to the LZTFL1 family. As to quaternary structure, self-associates. Interacts with BBS9; the interaction mediates the association of LZTL1 with the BBsome complex and regulates BBSome ciliary trafficking. Expressed in prostate, ovary, stomach, pancreas, esophagus, breast, liver, bladder, kidney, thyroid, colon and lung (at protein level). Down-regulated in multiple primary tumors (at protein level). Detected in testis, heart, skeletal muscle, thymus, spleen, small intestine, and peripheral blood leukocytes.

The protein localises to the cytoplasm. In terms of biological role, regulates ciliary localization of the BBSome complex. Together with the BBSome complex, controls SMO ciliary trafficking and contributes to the sonic hedgehog (SHH) pathway regulation. May play a role in neurite outgrowth. May have tumor suppressor function. The chain is Leucine zipper transcription factor-like protein 1 (LZTFL1) from Homo sapiens (Human).